Here is a 160-residue protein sequence, read N- to C-terminus: Transcription antitermination protein NusB (160 aa).

Belongs to the NusB family.

Functionally, involved in transcription antitermination. Required for transcription of ribosomal RNA (rRNA) genes. Binds specifically to the boxA antiterminator sequence of the ribosomal RNA (rrn) operons. This is Transcription antitermination protein NusB from Maricaulis maris (strain MCS10) (Caulobacter maris).